The chain runs to 82 residues: Small ribosomal subunit protein bS18 (82 aa).

The protein belongs to the bacterial ribosomal protein bS18 family. Part of the 30S ribosomal subunit. Forms a tight heterodimer with protein bS6.

In terms of biological role, binds as a heterodimer with protein bS6 to the central domain of the 16S rRNA, where it helps stabilize the platform of the 30S subunit. The polypeptide is Small ribosomal subunit protein bS18 (Methylobacterium nodulans (strain LMG 21967 / CNCM I-2342 / ORS 2060)).